A 589-amino-acid polypeptide reads, in one-letter code: Aspartate--tRNA ligase (589 aa).

L-aspartate is bound at residue glutamate 175. Residues 199–202 (QLFK) form an aspartate region. Position 221 (arginine 221) interacts with L-aspartate. Residues 221-223 (RDE) and glutamine 230 each bind ATP. Histidine 449 serves as a coordination point for L-aspartate. Residue glutamate 483 participates in ATP binding. L-aspartate is bound at residue arginine 490. Residue 535–538 (GLDR) participates in ATP binding.

Belongs to the class-II aminoacyl-tRNA synthetase family. Type 1 subfamily. Homodimer.

The protein resides in the cytoplasm. The enzyme catalyses tRNA(Asp) + L-aspartate + ATP = L-aspartyl-tRNA(Asp) + AMP + diphosphate. Catalyzes the attachment of L-aspartate to tRNA(Asp) in a two-step reaction: L-aspartate is first activated by ATP to form Asp-AMP and then transferred to the acceptor end of tRNA(Asp). This Lysinibacillus sphaericus (strain C3-41) protein is Aspartate--tRNA ligase.